The chain runs to 202 residues: Riboflavin synthase (202 aa).

Lumazine-binding repeat units lie at residues 1–101 and 102–198; these read MFTG…MGGH and LVFG…ARLA. 2,4-dihydroxypteridine contacts are provided by residues 4–6, 47–49, 66–68, 105–107, Lys-140, 149–151, and 163–168; these read GII, CLT, EAW, GHV, SLT, and LLIRHS.

In terms of assembly, homotrimer.

It carries out the reaction 2 6,7-dimethyl-8-(1-D-ribityl)lumazine + H(+) = 5-amino-6-(D-ribitylamino)uracil + riboflavin. It functions in the pathway cofactor biosynthesis; riboflavin biosynthesis; riboflavin from 2-hydroxy-3-oxobutyl phosphate and 5-amino-6-(D-ribitylamino)uracil: step 2/2. Is inhibited by riboflavin. Product inhibition may be the major mechanism by which RS regulates its enzymatic activity in vivo. In terms of biological role, catalyzes the dismutation of two molecules of 6,7-dimethyl-8-ribityllumazine, resulting in the formation of riboflavin and 5-amino-6-(D-ribitylamino)uracil. This chain is Riboflavin synthase, found in Brucella abortus (strain 2308).